A 163-amino-acid polypeptide reads, in one-letter code: Photosystem II extrinsic protein V (163 aa).

The first 26 residues, 1 to 26 (MFKKSSQLFSLVFFTIFSIFIGTASA), serve as a signal peptide directing secretion. Residues C63, C66, H67, and M130 each contribute to the heme c site.

It belongs to the cytochrome c family. PsbV subfamily. PSII is composed of 1 copy each of membrane proteins PsbA, PsbB, PsbC, PsbD, PsbE, PsbF, PsbH, PsbI, PsbJ, PsbK, PsbL, PsbM, PsbT, PsbY, PsbZ, Psb30/Ycf12, at least 3 peripheral proteins of the oxygen-evolving complex and a large number of cofactors. It forms dimeric complexes. The cofactor is heme c.

The protein localises to the plastid. Its subcellular location is the chloroplast thylakoid membrane. One of the extrinsic, lumenal subunits of photosystem II (PSII). PSII is a light-driven water plastoquinone oxidoreductase, using light energy to abstract electrons from H(2)O, generating a proton gradient subsequently used for ATP formation. The extrinsic proteins stabilize the structure of photosystem II oxygen-evolving complex (OEC), the ion environment of oxygen evolution and protect the OEC against heat-induced inactivation. This is Photosystem II extrinsic protein V from Phaeodactylum tricornutum (strain CCAP 1055/1).